A 309-amino-acid polypeptide reads, in one-letter code: Coproporphyrin III ferrochelatase (309 aa).

Fe-coproporphyrin III contacts are provided by residues tyrosine 12, arginine 29, arginine 45–tyrosine 46, serine 53, and tyrosine 124. Residues histidine 182 and glutamate 263 each coordinate Fe(2+).

The protein belongs to the ferrochelatase family.

The protein resides in the cytoplasm. It catalyses the reaction Fe-coproporphyrin III + 2 H(+) = coproporphyrin III + Fe(2+). It functions in the pathway porphyrin-containing compound metabolism; protoheme biosynthesis. Functionally, involved in coproporphyrin-dependent heme b biosynthesis. Catalyzes the insertion of ferrous iron into coproporphyrin III to form Fe-coproporphyrin III. This Listeria innocua serovar 6a (strain ATCC BAA-680 / CLIP 11262) protein is Coproporphyrin III ferrochelatase.